The following is a 107-amino-acid chain: EMBRYO SURROUNDING FACTOR 1-like protein 5 (107 aa).

A signal peptide spans 1–22 (MSLLRFAILCIIFVSLFGVHEC). 4 disulfides stabilise this stretch: Cys-35/Cys-49, Cys-40/Cys-69, Cys-47/Cys-65, and Cys-50/Cys-58. Residues 87-107 (GLGPPIYLFFLGQFIYFVLGL) form a helical membrane-spanning segment.

This sequence belongs to the MEG family. As to expression, expressed in flowers.

It is found in the membrane. This Arabidopsis thaliana (Mouse-ear cress) protein is EMBRYO SURROUNDING FACTOR 1-like protein 5 (ESFL5).